The chain runs to 748 residues: Serine/threonine-protein kinase CG17528 (748 aa).

2 stretches are compositionally biased toward polar residues: residues 22-35 (QASP…SVPS) and 47-59 (EKTN…QEDN). Disordered regions lie at residues 22–41 (QASP…NVVT) and 47–81 (EKTN…ELDD). Residues serine 67, serine 70, serine 73, serine 87, serine 88, and serine 89 each carry the phosphoserine modification. Position 91 is a phosphothreonine (threonine 91). Residue serine 93 is modified to Phosphoserine. The residue at position 100 (threonine 100) is a Phosphothreonine. Doublecortin domains lie at 158 to 244 (LRIK…VEYN) and 313 to 396 (RIVT…AEDF). One can recognise a Protein kinase domain in the interval 477–735 (YSLGRIIGDG…SEDILDHSWT (259 aa)). ATP is bound by residues 483-491 (IGDGNFAIV) and lysine 506. Catalysis depends on aspartate 598, which acts as the Proton acceptor.

Belongs to the protein kinase superfamily. CAMK Ser/Thr protein kinase family. CaMK subfamily.

The enzyme catalyses L-seryl-[protein] + ATP = O-phospho-L-seryl-[protein] + ADP + H(+). It carries out the reaction L-threonyl-[protein] + ATP = O-phospho-L-threonyl-[protein] + ADP + H(+). This is Serine/threonine-protein kinase CG17528 from Drosophila melanogaster (Fruit fly).